The following is a 351-amino-acid chain: ATP-dependent 6-phosphofructokinase subunit gamma (351 aa).

Heterododecamer of 4 alpha, 4 beta and 4 gamma chains. The gamma chain bridges the N-terminal halves of the alpha and beta subunits.

The protein localises to the cytoplasm. The protein operates within carbohydrate degradation; glycolysis; D-glyceraldehyde 3-phosphate and glycerone phosphate from D-glucose: step 3/4. Functionally, structural subunit of pyrophosphate--fructose 6-phosphate 1-phosphotransferase. Not required for catalytic activity. Fine-tunes allosteric regulation of the ATP-PFK by ATP, fructose 2,6-bisphosphate and AMP. The protein is ATP-dependent 6-phosphofructokinase subunit gamma (PFK3) of Komagataella phaffii (strain GS115 / ATCC 20864) (Yeast).